The primary structure comprises 809 residues: H(+)/Cl(-) exchange transporter 7 (809 aa).

Residues 1–130 (MANVSKKVSW…TAFRTVEIKR (130 aa)) are Cytoplasmic-facing. 2 positions are modified to phosphoserine: S9 and S64. Helical transmembrane passes span 131 to 163 (WVICAMVGILTGLVACFIDIVVEKLAGLKYRLV) and 178 to 201 (FSLLLWAALNAAFVLLGSTIVAFI). Positions 207-211 (GSGIP) match the Selectivity filter part_1 motif. S208 contacts chloride. The segment at residues 210-217 (IPQIKCFL) is an intramembrane region (helical). The next 2 helical transmembrane spans lie at 227-245 (RLKTLVIKVSGVILSVVGG) and 251-268 (EGPMIHSGSVIAAGISQG). Residues 249–253 (GKEGP) carry the Selectivity filter part_2 motif. Intramembrane regions (helical) lie at residues 292-304 (FVSAGAAAGVSAA) and 308-316 (PVGGVLFSL). The next 5 membrane-spanning stretches (helical) occupy residues 326-345 (FLTWRIFFASMISTFTLNFV), 379-409 (IPIFIAMGVVGGILGAVFNALNYWLTMFRIR), 414-436 (PCLQVVEATLVAAVTATAAFVLI), 491-511 (PMTLGLFTLVYFFLACWTYGL), and 516-539 (GVFIPSLLIGAAWGRLFGISLSYI). A Selectivity filter part_3 motif is present at residues 516-520 (GVFIP). Position 518 (F518) interacts with chloride. Residues 549–563 (GKYALMGAAAQLGGI) constitute an intramembrane region (helical). The segment at residues 564-566 (VRM) is an intramembrane region (note=Loop between two helices). The helical intramembrane region spans 567 to 578 (TLSLTVIMMEAT). The note=Loop between two helices intramembrane region spans 579-582 (SSVT). Residues 583 to 601 (YGFPIMLVLMTAKIVGDVF) form a helical membrane-spanning segment. Residues 602–809 (IEGLYDMHIQ…GLEELSLAQT (208 aa)) are Cytoplasmic-facing. Position 606 (Y606) interacts with chloride. 2 CBS domains span residues 635-699 (MSTP…VFVE) and 745-803 (MNPS…GLEE). Residues 662–664 (HNG) and 787–790 (TRKD) contribute to the ATP site. Phosphoserine is present on S805.

Belongs to the chloride channel (TC 2.A.49) family. ClC-7/CLCN7 subfamily. As to quaternary structure, chloride channel 7 are heteromers of alpha (CLCN7) and beta (OSTM1) subunits.

It is found in the lysosome membrane. The enzyme catalyses 2 chloride(in) + H(+)(out) = 2 chloride(out) + H(+)(in). Slowly voltage-gated channel mediating the exchange of chloride ions against protons. Functions as antiporter and contributes to the acidification of the lysosome lumen and may be involved in maintaining lysosomal pH. The CLC channel family contains both chloride channels and proton-coupled anion transporters that exchange chloride or another anion for protons. The presence of conserved gating glutamate residues is typical for family members that function as antiporters. This Bos taurus (Bovine) protein is H(+)/Cl(-) exchange transporter 7 (CLCN7).